A 227-amino-acid chain; its full sequence is Probable maleylacetoacetate isomerase 2 (227 aa).

Residues I14 to P97 form the GST N-terminal domain. Glutathione-binding positions include S24 to R29, Q55, V69, E81 to S82, Q121, and N125 to I127. The GST C-terminal domain maps to D102–P222.

Belongs to the GST superfamily. Zeta family. The cofactor is glutathione.

It is found in the cytoplasm. The catalysed reaction is 4-maleylacetoacetate = 4-fumarylacetoacetate. It carries out the reaction RX + glutathione = an S-substituted glutathione + a halide anion + H(+). The protein operates within amino-acid degradation; L-phenylalanine degradation; acetoacetate and fumarate from L-phenylalanine: step 5/6. Functionally, catalyzes the glutathione dependent oxygenation of dichloroacetic acid to glyoxylic acid in vitro. Has no glutathione thioltransferase activity with 4-hydroxynonenal (4-HNE), adrenochrome, phenethyl isothiocyanate (PEITC), 5-hydroperoxyeicosatetraenoic acid ((5S)-HpETE), prostaglandin A2 (PGA2) or 2-hydroxyethyldisulfide (HED). This chain is Probable maleylacetoacetate isomerase 2 (GstZ2), found in Drosophila melanogaster (Fruit fly).